We begin with the raw amino-acid sequence, 357 residues long: MALQKVDISLSTEQLLQAQVHVWNHMYAFANSMSLKCAIQLGIPDILHKHGRPMTLSQLLQSIPINKEKTQCFQRLMRALVNSNFFIEENNSNNQEVCYWLTPASCLLLKEAPLTVTPLVQVVLDPTFTNPWHHMSEWFTHEKHATQFEAANGCTFWEKLANEPSKGRFFDEAMSCDSRLIAHVFTKDYKHVIEGIRTLVDVGGGNGTMAKAIVEAMPTIKCTVIDLPHVVAGLESTDNLNYIGGDMFQSIPSADAILLKSIIHDWDDVEGLKILKKCKDAVVMGGKVIIIDVVVGVNHDIDEVLEDQLHFDMAMMCYFNAKERTMSEWEKLIYDAGFKSYKLTPAFGVRSLIEAYP.

5 residues coordinate S-adenosyl-L-methionine: Gly-203, Asp-226, Asp-246, Met-247, and Lys-260. The Proton acceptor role is filled by His-264.

This sequence belongs to the class I-like SAM-binding methyltransferase superfamily. Cation-independent O-methyltransferase family. COMT subfamily. As to expression, specifically expressed in the peltate glandular trichomes on the surface of the young basil leaves.

It carries out the reaction (E)-isoeugenol + S-adenosyl-L-methionine = (E)-isomethyleugenol + S-adenosyl-L-homocysteine + H(+). The protein operates within aromatic compound metabolism; phenylpropanoid biosynthesis. Functionally, phenylpropene O-methyltransferase that catalyzes the methylation of the para-4-hydroxyl of eugenol to methyleugenol. Can also convert chavicol to methylchavicol but with less affinity. This is Eugenol O-methyltransferase (EOMT1) from Ocimum basilicum (Sweet basil).